The following is a 130-amino-acid chain: C-type natriuretic peptide 2 (130 aa).

Residues 1-22 (MAASSSSFVPLVLLFLAIPVEP) form the signal peptide. Positions 23–103 (RPSMTRDEAQ…LQQQSKTTRR (81 aa)) are excised as a propeptide. The disordered stretch occupies residues 57–77 (ELLPRRPGPPRSFGASPGALR). C114 and C130 are disulfide-bonded.

It belongs to the natriuretic peptide family.

Its subcellular location is the secreted. Exhibits natriuretic and vasodepressant activity. Has cGMP-stimulating activity. May help to regulate body fluid homeostasis in a variety of aquatic environments. The polypeptide is C-type natriuretic peptide 2 (Takifugu rubripes (Japanese pufferfish)).